The primary structure comprises 311 residues: Bifunctional protein FolD (311 aa).

NADP(+) is bound at residue 174 to 176 (GKG).

This sequence belongs to the tetrahydrofolate dehydrogenase/cyclohydrolase family. In terms of assembly, homodimer.

It catalyses the reaction (6R)-5,10-methylene-5,6,7,8-tetrahydrofolate + NADP(+) = (6R)-5,10-methenyltetrahydrofolate + NADPH. The enzyme catalyses (6R)-5,10-methenyltetrahydrofolate + H2O = (6R)-10-formyltetrahydrofolate + H(+). It participates in one-carbon metabolism; tetrahydrofolate interconversion. In terms of biological role, catalyzes the oxidation of 5,10-methylenetetrahydrofolate to 5,10-methenyltetrahydrofolate and then the hydrolysis of 5,10-methenyltetrahydrofolate to 10-formyltetrahydrofolate. This chain is Bifunctional protein FolD, found in Pyrobaculum arsenaticum (strain DSM 13514 / JCM 11321 / PZ6).